A 390-amino-acid polypeptide reads, in one-letter code: GTPase Obg (390 aa).

Residues 1-159 form the Obg domain; the sequence is MKFIDEALIR…RDLQLELMLL (159 aa). Residues 160-333 form the OBG-type G domain; it reads ADVGMLGLPN…LCRDIMDFIE (174 aa). GTP contacts are provided by residues 166–173, 191–195, 213–216, 283–286, and 314–316; these read GLPNAGKS, FTTLV, DIPG, NKID, and SAV. S173 and T193 together coordinate Mg(2+). Positions 363–390 are disordered; sequence DHQFEDEDEDWDDWSEEDEEGVETIYKP. The span at 366–384 shows a compositional bias: acidic residues; it reads FEDEDEDWDDWSEEDEEGV.

This sequence belongs to the TRAFAC class OBG-HflX-like GTPase superfamily. OBG GTPase family. Monomer. It depends on Mg(2+) as a cofactor.

Its subcellular location is the cytoplasm. Its function is as follows. An essential GTPase which binds GTP, GDP and possibly (p)ppGpp with moderate affinity, with high nucleotide exchange rates and a fairly low GTP hydrolysis rate. Plays a role in control of the cell cycle, stress response, ribosome biogenesis and in those bacteria that undergo differentiation, in morphogenesis control. This chain is GTPase Obg, found in Pasteurella multocida (strain Pm70).